We begin with the raw amino-acid sequence, 205 residues long: Imidazoleglycerol-phosphate dehydratase (205 aa).

This sequence belongs to the imidazoleglycerol-phosphate dehydratase family.

Its subcellular location is the cytoplasm. The enzyme catalyses D-erythro-1-(imidazol-4-yl)glycerol 3-phosphate = 3-(imidazol-4-yl)-2-oxopropyl phosphate + H2O. It functions in the pathway amino-acid biosynthesis; L-histidine biosynthesis; L-histidine from 5-phospho-alpha-D-ribose 1-diphosphate: step 6/9. The chain is Imidazoleglycerol-phosphate dehydratase from Chloroflexus aurantiacus (strain ATCC 29366 / DSM 635 / J-10-fl).